The primary structure comprises 494 residues: 2,3-bisphosphoglycerate-independent phosphoglycerate mutase (494 aa).

Mn(2+)-binding residues include aspartate 12 and serine 62. The Phosphoserine intermediate role is filled by serine 62. Substrate-binding positions include histidine 121, 150–151, arginine 181, arginine 187, 252–255, and lysine 317; these read RD and RSDR. Aspartate 384, histidine 388, aspartate 425, histidine 426, and histidine 443 together coordinate Mn(2+).

The protein belongs to the BPG-independent phosphoglycerate mutase family. In terms of assembly, monomer. It depends on Mn(2+) as a cofactor.

It carries out the reaction (2R)-2-phosphoglycerate = (2R)-3-phosphoglycerate. It participates in carbohydrate degradation; glycolysis; pyruvate from D-glyceraldehyde 3-phosphate: step 3/5. Catalyzes the interconversion of 2-phosphoglycerate and 3-phosphoglycerate. In Anaplasma marginale (strain St. Maries), this protein is 2,3-bisphosphoglycerate-independent phosphoglycerate mutase.